Here is a 385-residue protein sequence, read N- to C-terminus: Homoserine O-succinyltransferase (385 aa).

Positions 46–355 (NAILICHALS…NSQHGHDAFL (310 aa)) constitute an AB hydrolase-1 domain. Ser151 serves as the catalytic Nucleophile. Residue Arg221 coordinates substrate. Active-site residues include Asp318 and His351. Asp352 contributes to the substrate binding site.

The protein belongs to the AB hydrolase superfamily. MetX family. In terms of assembly, homodimer.

The protein localises to the cytoplasm. It catalyses the reaction L-homoserine + succinyl-CoA = O-succinyl-L-homoserine + CoA. Its pathway is amino-acid biosynthesis; L-methionine biosynthesis via de novo pathway; O-succinyl-L-homoserine from L-homoserine: step 1/1. Its function is as follows. Transfers a succinyl group from succinyl-CoA to L-homoserine, forming succinyl-L-homoserine. This chain is Homoserine O-succinyltransferase, found in Hydrogenovibrio crunogenus (strain DSM 25203 / XCL-2) (Thiomicrospira crunogena).